Here is a 388-residue protein sequence, read N- to C-terminus: Mannitol-1-phosphate 5-dehydrogenase (388 aa).

4 to 15 (AVHFGAGNIGRG) is a binding site for NAD(+).

It belongs to the mannitol dehydrogenase family.

The catalysed reaction is D-mannitol 1-phosphate + NAD(+) = beta-D-fructose 6-phosphate + NADH + H(+). The polypeptide is Mannitol-1-phosphate 5-dehydrogenase (Lactococcus lactis subsp. cremoris (strain SK11)).